The following is an 83-amino-acid chain: Putative beta-neurotoxin RjAa15f (83 aa).

Residues M1–C18 form the signal peptide. The LCN-type CS-alpha/beta domain maps to K19–V82. Intrachain disulfides connect C29–C81, C33–C55, C40–C62, and C44–C64.

The protein belongs to the long (4 C-C) scorpion toxin superfamily. Sodium channel inhibitor family. Beta subfamily. In terms of tissue distribution, expressed by the venom gland.

It is found in the secreted. In terms of biological role, beta toxins bind voltage-independently at site-4 of sodium channels (Nav) and shift the voltage of activation toward more negative potentials thereby affecting sodium channel activation and promoting spontaneous and repetitive firing. The polypeptide is Putative beta-neurotoxin RjAa15f (Rhopalurus junceus (Caribbean blue scorpion)).